The primary structure comprises 892 residues: Alpha-actinin-1 (892 aa).

Position 1 is an N-acetylmethionine (methionine 1). Residues methionine 1–histidine 247 are actin-binding. A Phosphoserine modification is found at serine 6. Tyrosine 12 carries the post-translational modification Phosphotyrosine; by FAK1. Calponin-homology (CH) domains follow at residues lysine 31–alanine 135 and threonine 144–serine 250. N6-acetyllysine occurs at positions 95 and 195. Spectrin repeat units lie at residues glutamine 274–asparagine 384, histidine 394–arginine 499, glutamine 509–glutamate 620, and arginine 630–asparagine 733. The interval glutamine 274–asparagine 733 is interaction with DDN. Serine 471 is subject to Phosphoserine. Lysine 676 carries the post-translational modification N6-acetyllysine. The residue at position 677 (serine 677) is a Phosphoserine. 2 EF-hand domains span residues glutamate 746–aspartate 781 and glutamine 787–aspartate 822. Positions 759, 761, 763, 765, and 770 each coordinate Ca(2+). Serine 890 is subject to Phosphoserine.

It belongs to the alpha-actinin family. Homodimer; antiparallel. Interacts with MYOZ2, TTID and LPP. Interacts with DDN. Interacts with PSD. Interacts with MICALL2. Interacts with DNM2 and CTTN. Interacts with PDLIM1. Interacts with PDLIM2. Interacts with PDLIM4 (via PDZ domain). Interacts with IGSF8.

The protein resides in the cytoplasm. Its subcellular location is the cytoskeleton. It is found in the myofibril. The protein localises to the sarcomere. It localises to the z line. The protein resides in the cell membrane. Its subcellular location is the cell junction. It is found in the cell projection. The protein localises to the ruffle. In terms of biological role, F-actin cross-linking protein which is thought to anchor actin to a variety of intracellular structures. Association with IGSF8 regulates the immune synapse formation and is required for efficient T-cell activation. The chain is Alpha-actinin-1 (ACTN1) from Bos taurus (Bovine).